A 119-amino-acid chain; its full sequence is NADH-quinone oxidoreductase subunit A (119 aa).

The next 3 membrane-spanning stretches (helical) occupy residues Val9–Val29, Leu63–Val83, and Val88–Ala108.

Belongs to the complex I subunit 3 family. As to quaternary structure, NDH-1 is composed of 14 different subunits. Subunits NuoA, H, J, K, L, M, N constitute the membrane sector of the complex.

Its subcellular location is the cell inner membrane. It catalyses the reaction a quinone + NADH + 5 H(+)(in) = a quinol + NAD(+) + 4 H(+)(out). Its function is as follows. NDH-1 shuttles electrons from NADH, via FMN and iron-sulfur (Fe-S) centers, to quinones in the respiratory chain. The immediate electron acceptor for the enzyme in this species is believed to be ubiquinone. Couples the redox reaction to proton translocation (for every two electrons transferred, four hydrogen ions are translocated across the cytoplasmic membrane), and thus conserves the redox energy in a proton gradient. This is NADH-quinone oxidoreductase subunit A from Acidovorax sp. (strain JS42).